Reading from the N-terminus, the 181-residue chain is Cyclic AMP-dependent transcription factor ATF-3 (181 aa).

The interval 73–97 (EMSVTKSEAAPEEDERKRRRRERNK) is disordered. K78 is covalently cross-linked (Glycyl lysine isopeptide (Lys-Gly) (interchain with G-Cter in SUMO2)). The bZIP domain maps to 86–149 (DERKRRRRER…QHLIYMLNLH (64 aa)). Residues 88–110 (RKRRRRERNKIAAAKCRNKKKEK) are basic motif. The leucine-zipper stretch occupies residues 114 to 142 (LQKESEKLESVNAELKAQIEELKNEKQHL). At T162 the chain carries Phosphothreonine. A Glycyl lysine isopeptide (Lys-Gly) (interchain with G-Cter in SUMO2) cross-link involves residue K175.

Belongs to the bZIP family. ATF subfamily. In terms of assembly, binds DNA as a homodimer or a heterodimer. Interacts with KAT5; promoting KAT5 autoacetylation and KAT5 deubiquitination by USP7.

The protein resides in the nucleus. Its function is as follows. This protein binds the cAMP response element (CRE) (consensus: 5'-GTGACGT[AC][AG]-3'), a sequence present in many viral and cellular promoters. Represses transcription from promoters with ATF sites. It may repress transcription by stabilizing the binding of inhibitory cofactors at the promoter. This chain is Cyclic AMP-dependent transcription factor ATF-3, found in Mus musculus (Mouse).